A 334-amino-acid polypeptide reads, in one-letter code: GTP 3',8-cyclase (334 aa).

Residues R13 to A239 enclose the Radical SAM core domain. R22 serves as a coordination point for GTP. Positions 29 and 33 each coordinate [4Fe-4S] cluster. S-adenosyl-L-methionine is bound at residue Y35. Residue C36 coordinates [4Fe-4S] cluster. R73 serves as a coordination point for GTP. G77 contributes to the S-adenosyl-L-methionine binding site. T104 is a binding site for GTP. S128 is an S-adenosyl-L-methionine binding site. Residue K165 coordinates GTP. M199 contacts S-adenosyl-L-methionine. Residues C262 and C265 each coordinate [4Fe-4S] cluster. R267 to R269 serves as a coordination point for GTP. C279 is a [4Fe-4S] cluster binding site.

The protein belongs to the radical SAM superfamily. MoaA family. In terms of assembly, monomer and homodimer. [4Fe-4S] cluster serves as cofactor.

The enzyme catalyses GTP + AH2 + S-adenosyl-L-methionine = (8S)-3',8-cyclo-7,8-dihydroguanosine 5'-triphosphate + 5'-deoxyadenosine + L-methionine + A + H(+). Its pathway is cofactor biosynthesis; molybdopterin biosynthesis. In terms of biological role, catalyzes the cyclization of GTP to (8S)-3',8-cyclo-7,8-dihydroguanosine 5'-triphosphate. The sequence is that of GTP 3',8-cyclase from Vibrio vulnificus (strain YJ016).